A 443-amino-acid chain; its full sequence is D(2) dopamine receptor (443 aa).

Residues 1–37 are Extracellular-facing; sequence MDPLNLSWYDDDLERQNWSRPFNGSDGKADRPHYNYY. N-linked (GlcNAc...) asparagine glycosylation is found at Asn-5, Asn-17, and Asn-23. A helical membrane pass occupies residues 38 to 60; it reads ATLLTLLIAVIVFGNVLVCMAVS. Topologically, residues 61 to 70 are cytoplasmic; sequence REKALQTTTN. The helical transmembrane segment at 71 to 93 threads the bilayer; it reads YLIVSLAVADLLVATLVMPWVVY. Residues 94 to 108 lie on the Extracellular side of the membrane; that stretch reads LEVVGEWKFSRIHCD. Cys-107 and Cys-182 form a disulfide bridge. Residues 109 to 130 form a helical membrane-spanning segment; the sequence is IFVTLDVMMCTASILNLCAISI. Topologically, residues 131 to 151 are cytoplasmic; the sequence is DRYTAVAMPMLYNTRYSSKRR. A helical transmembrane segment spans residues 152–172; sequence VTVMISIVWVLSFTISCPLLF. The Extracellular segment spans residues 173–188; sequence GLNNADQNECIIANPA. Residues 189-213 traverse the membrane as a helical segment; it reads FVVYSSIVSFYVPFIVTLLVYIKIY. An interaction with PPP1R9B region spans residues 211 to 373; it reads KIYIVLRRRR…SQQKEKKATQ (163 aa). Residues 214 to 373 are Cytoplasmic-facing; it reads IVLRRRRKRV…SQQKEKKATQ (160 aa). The interval 281–332 is disordered; sequence MEMLSSTSPPERTRYSPIPPSHHQLTLPDPSHHGLHSTPDSPAKPEKNGHAK. Residues 323 to 332 show a composition bias toward basic and acidic residues; that stretch reads AKPEKNGHAK. A helical membrane pass occupies residues 374–395; the sequence is MLAIVLGVFIICWLPFFITHIL. Over 396–409 the chain is Extracellular; that stretch reads NIHCDCNIPPVLYS. Cys-399 and Cys-401 are joined by a disulfide. Residues 410 to 431 traverse the membrane as a helical segment; that stretch reads AFTWLGYVNSAVNPIIYTTFNI. Residues 432 to 443 lie on the Cytoplasmic side of the membrane; that stretch reads EFRKAFLKILHC. A lipid anchor (S-palmitoyl cysteine) is attached at Cys-443.

Belongs to the G-protein coupled receptor 1 family. As to quaternary structure, forms homo- and heterooligomers with DRD4. The interaction with DRD4 may modulate agonist-induced downstream signaling. Interacts with CADPS and CADPS2. Interacts with GPRASP1, PPP1R9B and CLIC6. Interacts with ARRB2. Interacts with HTR2A. Interacts with GNAI2 isoform sGi2, the interaction allows the creation of an intracellular pool of DRD2 that can be released to cell surface upon agonist stimulation. Interacts with DRD1. Interacts with KCNA2. Palmitoylated. Palmitoylation which is required for proper localization to the plasma membrane and stability of the receptor could be carried on by ZDHHC4, ZDHHC3 and ZDHHC8. As to expression, expressed in the anterior pituitary gland.

It localises to the cell membrane. The protein resides in the golgi apparatus membrane. Dopamine receptor whose activity is mediated by G proteins which inhibit adenylyl cyclase. Positively regulates postnatal regression of retinal hyaloid vessels via suppression of VEGFR2/KDR activity, downstream of OPN5. The chain is D(2) dopamine receptor (DRD2) from Homo sapiens (Human).